Here is a 79-residue protein sequence, read N- to C-terminus: Neurotoxin 3FTx-LI (79 aa).

An N-terminal signal peptide occupies residues 1–21; the sequence is MKTLLLTLVVVTIVCLDLGYT. 4 disulfide bridges follow: C24-C43, C36-C61, C65-C71, and C72-C77.

As to expression, expressed by the venom gland.

The protein resides in the secreted. In terms of biological role, blocks both the muscle-twitch response to nerve stimulation and the response to exogenous acetylcholine. This chain is Neurotoxin 3FTx-LI, found in Bungarus fasciatus (Banded krait).